A 352-amino-acid chain; its full sequence is Selenide, water dikinase (352 aa).

The active site involves cysteine 23. Residues lysine 26 and 54-56 (SRD) each bind ATP. Aspartate 57 provides a ligand contact to Mg(2+). ATP contacts are provided by residues aspartate 74, aspartate 97, and 145–147 (GHS). Aspartate 97 contributes to the Mg(2+) binding site. Position 233 (aspartate 233) interacts with Mg(2+).

This sequence belongs to the selenophosphate synthase 1 family. Class I subfamily. In terms of assembly, homodimer. Requires Mg(2+) as cofactor.

It catalyses the reaction hydrogenselenide + ATP + H2O = selenophosphate + AMP + phosphate + 2 H(+). Functionally, synthesizes selenophosphate from selenide and ATP. The polypeptide is Selenide, water dikinase (Shewanella baltica (strain OS185)).